We begin with the raw amino-acid sequence, 372 residues long: Heat shock 70 kDa protein II (372 aa).

It belongs to the heat shock protein 70 family.

In Paracentrotus lividus (Common sea urchin), this protein is Heat shock 70 kDa protein II (HSP70II).